A 305-amino-acid polypeptide reads, in one-letter code: Putative F-box protein PP2-B8 (305 aa).

The F-box domain occupies 33-79; that stretch reads VAELDDLPEECVSIIVSFTSPQDACVLASVSKTFASAVKSDIVWEKF.

The polypeptide is Putative F-box protein PP2-B8 (PP2B8) (Arabidopsis thaliana (Mouse-ear cress)).